The following is a 371-amino-acid chain: Putative glutamate--cysteine ligase 2 (371 aa).

It belongs to the glutamate--cysteine ligase type 2 family. YbdK subfamily.

It catalyses the reaction L-cysteine + L-glutamate + ATP = gamma-L-glutamyl-L-cysteine + ADP + phosphate + H(+). Its function is as follows. ATP-dependent carboxylate-amine ligase which exhibits weak glutamate--cysteine ligase activity. This is Putative glutamate--cysteine ligase 2 from Nitrosospira multiformis (strain ATCC 25196 / NCIMB 11849 / C 71).